Consider the following 238-residue polypeptide: MTAAAYKRILLKLSGEALMGDDAYGINEDVVSRIVSEIAEVTRLGVEVGVVIGGGNIFRGMKGAASGMDRATADYMGMLATVMNAMALADAMRRNGVEARVQSALRIDQVVEPYIRGRAIRHLEEGRVVIFAAGTGNPFFTTDTAAALRGSEIAAQIVLKATKVDGVYTADPKKDPAAQRFHRISFDEAIGRNLAVLDATAFALCRDQKLPINVFSIFKPGALKRVVMGEDEGTLVHS.

12-15 (KLSG) contacts ATP. Residue Gly-54 participates in UMP binding. ATP-binding residues include Gly-55 and Arg-59. UMP contacts are provided by residues Asp-74 and 135 to 142 (TGNPFFTT). ATP is bound by residues Thr-162, Tyr-168, and Asp-171.

It belongs to the UMP kinase family. As to quaternary structure, homohexamer.

It localises to the cytoplasm. The catalysed reaction is UMP + ATP = UDP + ADP. It functions in the pathway pyrimidine metabolism; CTP biosynthesis via de novo pathway; UDP from UMP (UMPK route): step 1/1. Its activity is regulated as follows. Inhibited by UTP. Functionally, catalyzes the reversible phosphorylation of UMP to UDP. The chain is Uridylate kinase from Azoarcus sp. (strain BH72).